The primary structure comprises 353 residues: uncharacterized protein (353 aa).

A signal peptide spans 1-24; the sequence is MRVVERAVIACYLGITIFSGIAFG.

It belongs to the chlamydial CPn_1058/CT_355/TC_0634 family.

This is an uncharacterized protein from Chlamydia trachomatis serovar D (strain ATCC VR-885 / DSM 19411 / UW-3/Cx).